We begin with the raw amino-acid sequence, 35 residues long: Photosystem II reaction center protein T (35 aa).

Residues 3-23 (ALVYTFLLVSTLGIIFFAIFF) form a helical membrane-spanning segment.

The protein belongs to the PsbT family. In terms of assembly, PSII is composed of 1 copy each of membrane proteins PsbA, PsbB, PsbC, PsbD, PsbE, PsbF, PsbH, PsbI, PsbJ, PsbK, PsbL, PsbM, PsbT, PsbY, PsbZ, Psb30/Ycf12, at least 3 peripheral proteins of the oxygen-evolving complex and a large number of cofactors. It forms dimeric complexes.

The protein localises to the plastid. It localises to the chloroplast thylakoid membrane. Functionally, found at the monomer-monomer interface of the photosystem II (PS II) dimer, plays a role in assembly and dimerization of PSII. PSII is a light-driven water plastoquinone oxidoreductase, using light energy to abstract electrons from H(2)O, generating a proton gradient subsequently used for ATP formation. The chain is Photosystem II reaction center protein T from Citrus sinensis (Sweet orange).